We begin with the raw amino-acid sequence, 407 residues long: Inactive non-canonical poly(A) RNA polymerase protein Trf4-2 (407 aa).

D85 and D87 together coordinate Mg(2+). One can recognise a PAP-associated domain in the interval 221-280 (LALLLIQFLDYYGRKFDFFKYGISVLGQGGCVEKARLRSTLGENNWQSVLCIEDPVTPTN). The interval 354–390 (LVQPSPTGSTSPSASASASEDERSGGPATIGFGRCDD) is disordered. Residues 357–371 (PSPTGSTSPSASASA) are compositionally biased toward low complexity.

Belongs to the DNA polymerase type-B-like family.

This Drosophila melanogaster (Fruit fly) protein is Inactive non-canonical poly(A) RNA polymerase protein Trf4-2.